An 863-amino-acid chain; its full sequence is MSKNTSDLSSHTPMMQQYWRLKNQHPDQLMFYRMGDFYEIFYEDAKKAAKLLDITLTARGQSAGQSIPMCGIPYHSLEGYLVKLVKLGESVVICEQIGDPATSKGPVERQVVRIITPGTVSDEALLDERRDNLIAAVLGDERLFGLSVLDITSGNFSVLEIKGWENLLAELERINPVELLIPDDWPKDLPAEKRRGTKRRAPWDFERDSALKSLCQQFSVQDLKGFGCETLTLAIGAAGCLLGYAKETQRTALPHLRSLRHERLDDTVVLDGASRRNLELDTNLAGGRDNTLQSVVDRCQTAMGSRLLTRWLNRPLRDLTVLQARQTSITCLLDGYRFEKLQPQLKEIGDIERILARIGLRNARPRDLARLRDALGALPQLQVAMTELDTPHLQQLAVTAGTYPELAALLEKAIIDNPPAIIRDGGVLKTGYDSELDELQSLSENAGQFLIDLEAREKARTGLANLKVGYNRVHGYFIELPSKQAESAPIDYQRRQTLKGAERFITPELKAFEDKALSAKSRALAREKMLYEALLEDLISQLAPLQDTAAALAELDVLSNLAERALNLDLNCPRFVSEPCMRIVQGRHPVVEQVLTTPFVANDLSLDDDTRMLVITGPNMGGKSTYMRQTALIVLLAHIGSFVPAASCELSLVDRIFTRIGSSDDLAGGRSTFMVEMSETANILHNATERSLVLMDEVGRGTSTFDGLSLAWAAAERLAHLRAYTLFATHYFELTVLPESEPLVTNVHLNATEHNERIVFLHHVLPGPASQSYGLAVAQLAGVPNDVITRAREHLSRLETTALPHETVVASPTKATSKPAAPHQSDMFASLPHPVLDELAKLDLDGLTPRKALEMLYALQVRI.

617–624 contacts ATP; that stretch reads GPNMGGKS.

Belongs to the DNA mismatch repair MutS family.

Functionally, this protein is involved in the repair of mismatches in DNA. It is possible that it carries out the mismatch recognition step. This protein has a weak ATPase activity. The sequence is that of DNA mismatch repair protein MutS from Pseudomonas fluorescens (strain SBW25).